We begin with the raw amino-acid sequence, 446 residues long: Histidine--tRNA ligase (446 aa).

Belongs to the class-II aminoacyl-tRNA synthetase family. As to quaternary structure, homodimer.

Its subcellular location is the cytoplasm. The catalysed reaction is tRNA(His) + L-histidine + ATP = L-histidyl-tRNA(His) + AMP + diphosphate + H(+). In Burkholderia pseudomallei (strain K96243), this protein is Histidine--tRNA ligase.